Here is a 92-residue protein sequence, read N- to C-terminus: Probable Fe(2+)-trafficking protein (92 aa).

The protein belongs to the Fe(2+)-trafficking protein family.

Its function is as follows. Could be a mediator in iron transactions between iron acquisition and iron-requiring processes, such as synthesis and/or repair of Fe-S clusters in biosynthetic enzymes. This Shewanella woodyi (strain ATCC 51908 / MS32) protein is Probable Fe(2+)-trafficking protein.